The chain runs to 175 residues: Auxin-responsive protein IAA28 (175 aa).

The disordered stretch occupies residues 1-39; sequence MEEEKRLELRLAPPCHQFTSNNNINGSKQKSSTKETSFL. An EAR-like (transcriptional repression) motif is present at residues 7-11; the sequence is LELRL. The segment covering 17–39 has biased composition (polar residues); the sequence is QFTSNNNINGSKQKSSTKETSFL. Positions 80-161 constitute a PB1 domain; the sequence is ELYVKINMEG…TVKRLHVLKT (82 aa).

Belongs to the Aux/IAA family. As to quaternary structure, homodimers and heterodimers. Interacts with TPL. As to expression, in roots and inflorescence stems.

The protein resides in the nucleus. In terms of biological role, aux/IAA proteins are short-lived transcriptional factors that function as repressors of early auxin response genes at low auxin concentrations. Repression is thought to result from the interaction with auxin response factors (ARFs), proteins that bind to the auxin-responsive promoter element (AuxRE). Formation of heterodimers with ARF proteins may alter their ability to modulate early auxin response genes expression. This chain is Auxin-responsive protein IAA28 (IAA28), found in Arabidopsis thaliana (Mouse-ear cress).